The following is a 338-amino-acid chain: Fructose-1,6-bisphosphatase class 1 (338 aa).

Mg(2+)-binding residues include Glu94, Asp116, Leu118, and Asp119. Substrate contacts are provided by residues 119-122, Asn210, and Lys276; that span reads DGSS. Glu282 provides a ligand contact to Mg(2+).

The protein belongs to the FBPase class 1 family. As to quaternary structure, homotetramer. The cofactor is Mg(2+).

Its subcellular location is the cytoplasm. It catalyses the reaction beta-D-fructose 1,6-bisphosphate + H2O = beta-D-fructose 6-phosphate + phosphate. It functions in the pathway carbohydrate biosynthesis; gluconeogenesis. The sequence is that of Fructose-1,6-bisphosphatase class 1 from Paraburkholderia phytofirmans (strain DSM 17436 / LMG 22146 / PsJN) (Burkholderia phytofirmans).